A 570-amino-acid polypeptide reads, in one-letter code: Protein misato homolog 1 (570 aa).

Ser495 is subject to Phosphoserine.

This sequence belongs to the misato family.

It localises to the mitochondrion outer membrane. Its subcellular location is the cytoplasm. Its function is as follows. Involved in the regulation of mitochondrial distribution and morphology. Required for mitochondrial fusion and mitochondrial network formation. This is Protein misato homolog 1 (MSTO1) from Pongo pygmaeus (Bornean orangutan).